Consider the following 506-residue polypeptide: 2-isopropylmalate synthase (506 aa).

Residues 4–266 form the Pyruvate carboxyltransferase domain; sequence ILFMDTTLRD…EPSMTLKEIK (263 aa). Aspartate 13, histidine 201, histidine 203, and asparagine 237 together coordinate Mn(2+). Residues 390–506 form a regulatory domain region; the sequence is NITQLQVHFV…KLKSFIQLVK (117 aa).

This sequence belongs to the alpha-IPM synthase/homocitrate synthase family. LeuA type 1 subfamily. In terms of assembly, homodimer. It depends on Mn(2+) as a cofactor.

The protein localises to the cytoplasm. The catalysed reaction is 3-methyl-2-oxobutanoate + acetyl-CoA + H2O = (2S)-2-isopropylmalate + CoA + H(+). It participates in amino-acid biosynthesis; L-leucine biosynthesis; L-leucine from 3-methyl-2-oxobutanoate: step 1/4. In terms of biological role, catalyzes the condensation of the acetyl group of acetyl-CoA with 3-methyl-2-oxobutanoate (2-ketoisovalerate) to form 3-carboxy-3-hydroxy-4-methylpentanoate (2-isopropylmalate). This is 2-isopropylmalate synthase from Bacillus anthracis (strain A0248).